Reading from the N-terminus, the 160-residue chain is Cyclic pyranopterin monophosphate synthase (160 aa).

Residues Met77–His79 and Met114–Glu115 contribute to the substrate site. The active site involves Asp129.

The protein belongs to the MoaC family. As to quaternary structure, homohexamer; trimer of dimers.

The catalysed reaction is (8S)-3',8-cyclo-7,8-dihydroguanosine 5'-triphosphate = cyclic pyranopterin phosphate + diphosphate. It functions in the pathway cofactor biosynthesis; molybdopterin biosynthesis. Its function is as follows. Catalyzes the conversion of (8S)-3',8-cyclo-7,8-dihydroguanosine 5'-triphosphate to cyclic pyranopterin monophosphate (cPMP). The protein is Cyclic pyranopterin monophosphate synthase of Listeria innocua serovar 6a (strain ATCC BAA-680 / CLIP 11262).